Here is a 344-residue protein sequence, read N- to C-terminus: S-adenosylmethionine:tRNA ribosyltransferase-isomerase (344 aa).

This sequence belongs to the QueA family. As to quaternary structure, monomer.

It localises to the cytoplasm. The enzyme catalyses 7-aminomethyl-7-carbaguanosine(34) in tRNA + S-adenosyl-L-methionine = epoxyqueuosine(34) in tRNA + adenine + L-methionine + 2 H(+). It participates in tRNA modification; tRNA-queuosine biosynthesis. Transfers and isomerizes the ribose moiety from AdoMet to the 7-aminomethyl group of 7-deazaguanine (preQ1-tRNA) to give epoxyqueuosine (oQ-tRNA). The sequence is that of S-adenosylmethionine:tRNA ribosyltransferase-isomerase from Pediococcus pentosaceus (strain ATCC 25745 / CCUG 21536 / LMG 10740 / 183-1w).